The sequence spans 150 residues: Nitric oxide reductase subunit C (150 aa).

The chain crosses the membrane as a helical; Signal-anchor span at residues 13–29 (IFYGGSLFFFLLFAALT). 3 residues coordinate heme c: Cys-62, Cys-65, and His-66.

As to quaternary structure, heterodimer of cytochromes b (large subunit) and c (small subunit).

The protein localises to the cell membrane. Component of the anaerobic respiratory chain that transforms nitrate to dinitrogen (denitrification). In Halomonas halodenitrificans (Paracoccus halodenitrificans), this protein is Nitric oxide reductase subunit C (norC).